The chain runs to 47 residues: Defensin Ec-AMP-D1 (47 aa).

Intrachain disulfides connect Cys3-Cys47, Cys14-Cys34, Cys20-Cys41, and Cys24-Cys43.

Functionally, has antifungal activity. Inhibits spore germination in F.graminearum (IC(50)=15 ug/ml), F.oxysporum (IC(50)=102 ug/ml), F.verticillioides (IC(50)=8.5 ug/ml) and D.maydis (IC(50)=12.5 ug/ml), but not in C.graminicola, B.cinerea and H.sativum at concentrations below 30 ug/ml. Inhibits hyphal development in P.infestans (IC(50)=25.5 ug/ml), but not release of zoospores. At concentrations above 100 ug/ml, induces morphological changes such as lysis of hyphae and sporangia in P.infestans. In Echinochloa crus-galli (Barnyard grass), this protein is Defensin Ec-AMP-D1.